A 209-amino-acid polypeptide reads, in one-letter code: Octanoyltransferase (209 aa).

The BPL/LPL catalytic domain occupies 30-209; that stretch reads DHEPEIIYLV…IQTEFNKIFK (180 aa). Residues 69 to 76, 143 to 145, and 156 to 158 contribute to the substrate site; these read RGGKFTFH, AIG, and GVA. Cys174 (acyl-thioester intermediate) is an active-site residue.

It belongs to the LipB family.

It is found in the cytoplasm. The catalysed reaction is octanoyl-[ACP] + L-lysyl-[protein] = N(6)-octanoyl-L-lysyl-[protein] + holo-[ACP] + H(+). It functions in the pathway protein modification; protein lipoylation via endogenous pathway; protein N(6)-(lipoyl)lysine from octanoyl-[acyl-carrier-protein]: step 1/2. Its function is as follows. Catalyzes the transfer of endogenously produced octanoic acid from octanoyl-acyl-carrier-protein onto the lipoyl domains of lipoate-dependent enzymes. Lipoyl-ACP can also act as a substrate although octanoyl-ACP is likely to be the physiological substrate. This chain is Octanoyltransferase, found in Rickettsia peacockii (strain Rustic).